We begin with the raw amino-acid sequence, 76 residues long: Exodeoxyribonuclease 7 small subunit (76 aa).

It belongs to the XseB family. Heterooligomer composed of large and small subunits.

It is found in the cytoplasm. It catalyses the reaction Exonucleolytic cleavage in either 5'- to 3'- or 3'- to 5'-direction to yield nucleoside 5'-phosphates.. Functionally, bidirectionally degrades single-stranded DNA into large acid-insoluble oligonucleotides, which are then degraded further into small acid-soluble oligonucleotides. This is Exodeoxyribonuclease 7 small subunit from Legionella pneumophila (strain Paris).